The sequence spans 337 residues: Trace amine-associated receptor 5 (337 aa).

Residues 1-38 lie on the Extracellular side of the membrane; it reads MRAVLLPGSGEQPTAFCYQVNGSCPRTVHPLAIQVVIY. Asn-21 carries an N-linked (GlcNAc...) asparagine glycan. Cystine bridges form between Cys-24/Cys-188 and Cys-99/Cys-192. Residues 39–59 traverse the membrane as a helical segment; the sequence is LACAVGVLITVLGNLFVVFAV. At 60 to 70 the chain is on the cytoplasmic side; sequence SYFKVLHTPTN. Residues 71-91 form a helical membrane-spanning segment; that stretch reads FLLLSLALADMLLGLLVLPLS. At 92 to 109 the chain is on the extracellular side; it reads TVRSVESCWFFGDFLCRL. The chain crosses the membrane as a helical span at residues 110–130; sequence HTYLDTLFCLTSIFHLCFISI. Over 131 to 154 the chain is Cytoplasmic; the sequence is DRHCAICDPLLYPSKFTVRTALRY. A helical membrane pass occupies residues 155–175; it reads IVAGWGIPAAYTAFFLYTDVV. Residues 176–189 are extracellular Loop 2 (ECL2); the sequence is ERALSQWLEEMPCV. At 176-204 the chain is on the extracellular side; sequence ERALSQWLEEMPCVGSCQLLFNKFWGWLN. A helical membrane pass occupies residues 205-225; sequence FPAFFVPCLIMISLYLKIFVV. Residues 226–253 are Cytoplasmic-facing; that stretch reads ATRQAQQIRTLSQSLAGAVKRERKAAKT. Residues 254-274 traverse the membrane as a helical segment; sequence LGIAVGIYLVCWLPFTVDTLV. The Extracellular portion of the chain corresponds to 275–284; it reads DSLLNFITPP. The helical transmembrane segment at 285–307 threads the bilayer; it reads LVFDIFIWFAYFNSACNPIIYVF. At 308–337 the chain is on the cytoplasmic side; that stretch reads SYRWFRKALKLLLSREIFSPRTPTVDLYHD.

Belongs to the G-protein coupled receptor 1 family. Specifically expressed in neurons of the olfactory epithelium, to discrete glomeruli predominantly localized to a confined bulb region. Present in the dorsal area of the main olfactory epithelium. Also present in the limbic brain areas receiving projection from the olfactory system and involved in the regulation of emotions. Also expressed in some brain regions outside the olfactory epithelium, such as the hippocampus, cerebellum, cortex, raphe nuclei, hypothalamus, and habenula.

Its subcellular location is the cell membrane. Inhibited by 1-[(5,5- diphenyloxolan-2-yl)methyl]-4-(2-methoxyphenyl)piperazine and N-[(2,2-diphenyl-1,3-dioxolan-4-yl)methyl]-2-(2- methoxyphenoxy)ethan-1-amine small molecules. In terms of biological role, olfactory receptor specific for trimethylamine, a trace amine enriched in the urine of male mice, playing a role in social behavior. Also activated by N-methylpiperidine. Trimethylamine is present at high concentration in the urine of male mice after puberty and acts as an attractant. Trimethylamine-binding causes a conformation change that triggers signaling via G(s)-class of G alpha proteins (GNAL or GNAS). Also required to provide olfactory input into limbic brain areas to regulate emotional behaviors likely via modulation of the serotonin system. This chain is Trace amine-associated receptor 5, found in Mus musculus (Mouse).